We begin with the raw amino-acid sequence, 125 residues long: Large ribosomal subunit protein bL12 (125 aa).

Belongs to the bacterial ribosomal protein bL12 family. Homodimer. Part of the ribosomal stalk of the 50S ribosomal subunit. Forms a multimeric L10(L12)X complex, where L10 forms an elongated spine to which 2 to 4 L12 dimers bind in a sequential fashion. Binds GTP-bound translation factors.

Forms part of the ribosomal stalk which helps the ribosome interact with GTP-bound translation factors. Is thus essential for accurate translation. The polypeptide is Large ribosomal subunit protein bL12 (Thioalkalivibrio sulfidiphilus (strain HL-EbGR7)).